The sequence spans 290 residues: NAD kinase (290 aa).

Aspartate 73 serves as the catalytic Proton acceptor. NAD(+)-binding positions include aspartate 73–glycine 74, asparagine 147–aspartate 148, arginine 158, arginine 175, aspartate 177, threonine 188–serine 193, and glutamine 246.

Belongs to the NAD kinase family. The cofactor is a divalent metal cation.

It is found in the cytoplasm. The catalysed reaction is NAD(+) + ATP = ADP + NADP(+) + H(+). Functionally, involved in the regulation of the intracellular balance of NAD and NADP, and is a key enzyme in the biosynthesis of NADP. Catalyzes specifically the phosphorylation on 2'-hydroxyl of the adenosine moiety of NAD to yield NADP. This chain is NAD kinase, found in Thiobacillus denitrificans (strain ATCC 25259 / T1).